Consider the following 393-residue polypeptide: E3 ubiquitin-protein transferase RMND5B (393 aa).

Met-1 bears the N-acetylmethionine mark. Residues 116–148 (QQQILQMAIVEHLYQQGMLSVAEELCQESTLNV) form the LisH domain. The region spanning 155-212 (PFLELNRILEALHEQDLGPALEWAVSHRQRLLELNSSLEFKLHRLHFIRLLAGGPEKQ) is the CTLH domain. An RING-Gid-type zinc finger spans residues 338–379 (CPILRQQTSDSNPPIKLICGHVISRDALNKLINGGKLKCPYC).

Identified in the CTLH complex that contains GID4, RANBP9 and/or RANBP10, MKLN1, MAEA, RMND5A (or alternatively its paralog RMND5B), GID8, ARMC8, WDR26 and YPEL5. Within this complex, MAEA, RMND5A (or alternatively its paralog RMND5B), GID8, WDR26, and RANBP9 and/or RANBP10 form the catalytic core, while GID4, MKLN1, ARMC8 and YPEL5 have ancillary roles.

The protein resides in the cytoplasm. The protein localises to the cytosol. The catalysed reaction is S-ubiquitinyl-[E2 ubiquitin-conjugating enzyme]-L-cysteine + [acceptor protein]-L-lysine = [E2 ubiquitin-conjugating enzyme]-L-cysteine + N(6)-ubiquitinyl-[acceptor protein]-L-lysine.. Core component of the CTLH E3 ubiquitin-protein ligase complex that selectively accepts ubiquitin from UBE2H and mediates ubiquitination and subsequent proteasomal degradation of the transcription factor HBP1. MAEA and RMND5A are both required for catalytic activity of the CTLH E3 ubiquitin-protein ligase complex. Catalytic activity of the complex is required for normal cell proliferation. The CTLH E3 ubiquitin-protein ligase complex is not required for the degradation of enzymes involved in gluconeogenesis, such as FBP1. This Mus musculus (Mouse) protein is E3 ubiquitin-protein transferase RMND5B (Rmnd5b).